A 488-amino-acid chain; its full sequence is 3-octaprenyl-4-hydroxybenzoate carboxy-lyase (488 aa).

Position 172 (Asn-172) interacts with Mn(2+). Prenylated FMN is bound by residues 175-177 (IYR), 189-191 (RWL), and 194-195 (RG). Glu-238 is a binding site for Mn(2+). The Proton donor role is filled by Asp-287.

The protein belongs to the UbiD family. As to quaternary structure, homohexamer. Prenylated FMN is required as a cofactor. The cofactor is Mn(2+).

The protein localises to the cell membrane. It carries out the reaction a 4-hydroxy-3-(all-trans-polyprenyl)benzoate + H(+) = a 2-(all-trans-polyprenyl)phenol + CO2. It participates in cofactor biosynthesis; ubiquinone biosynthesis. Catalyzes the decarboxylation of 3-octaprenyl-4-hydroxy benzoate to 2-octaprenylphenol, an intermediate step in ubiquinone biosynthesis. This chain is 3-octaprenyl-4-hydroxybenzoate carboxy-lyase, found in Pseudomonas syringae pv. syringae (strain B728a).